We begin with the raw amino-acid sequence, 193 residues long: Thioredoxin M4, chloroplastic (193 aa).

A chloroplast-targeting transit peptide spans 1–82 (MASLLDSVTV…RIACEAQDTT (82 aa)). The Thioredoxin domain occupies 83–192 (AAAVEVPNLS…LEKTIERFLV (110 aa)). Catalysis depends on nucleophile residues cysteine 116 and cysteine 119. Cysteines 116 and 119 form a disulfide.

This sequence belongs to the thioredoxin family. Plant M-type subfamily.

It localises to the plastid. It is found in the chloroplast stroma. Its function is as follows. Thiol-disulfide oxidoreductase involved in the redox regulation of enzyme of the oxidative pentose phosphate pathway. Under reducing conditions, inhibits the glucose-6-phosphate dehydrogenase. The sequence is that of Thioredoxin M4, chloroplastic from Arabidopsis thaliana (Mouse-ear cress).